The primary structure comprises 396 residues: ATP synthase subunit beta, chloroplastic (396 aa).

74–81 (GGAGVGKT) contributes to the ATP binding site.

Belongs to the ATPase alpha/beta chains family. As to quaternary structure, F-type ATPases have 2 components, CF(1) - the catalytic core - and CF(0) - the membrane proton channel. CF(1) has five subunits: alpha(3), beta(3), gamma(1), delta(1), epsilon(1). CF(0) has four main subunits: a(1), b(1), b'(1) and c(9-12).

The protein localises to the plastid. Its subcellular location is the chloroplast thylakoid membrane. It catalyses the reaction ATP + H2O + 4 H(+)(in) = ADP + phosphate + 5 H(+)(out). Functionally, produces ATP from ADP in the presence of a proton gradient across the membrane. The catalytic sites are hosted primarily by the beta subunits. The polypeptide is ATP synthase subunit beta, chloroplastic (Adiantum raddianum (Maidenhair fern)).